Reading from the N-terminus, the 273-residue chain is DnaJ homolog subfamily C member 27 (273 aa).

The required for interaction with MAPK1 stretch occupies residues 1–18; that stretch reads MESNVPKRKEPLKSLRIK. GTP-binding positions include 23–30, 71–75, and 134–137; these read GNAEVGKS, DMAGH, and NKID. The 57-residue stretch at 217–273 folds into the J domain; the sequence is DSWEMLGVRPGASREEVNKAYRKLAVLLHPDKCVAPGSEDAFKAVVNARTALLKNIK.

Belongs to the small GTPase superfamily. Rab family. In terms of assembly, interacts directly with MAPK1 (wild-type and kinase-deficient forms). Interacts directly (in GTP-bound form) with MAP2K1 (wild-type and kinase-deficient forms).

Its subcellular location is the nucleus. GTPase which can activate the MEK/ERK pathway and induce cell transformation when overexpressed. May act as a nuclear scaffold for MAPK1, probably by association with MAPK1 nuclear export signal leading to enhanced ERK1/ERK2 signaling. This chain is DnaJ homolog subfamily C member 27 (Dnajc27), found in Rattus norvegicus (Rat).